A 286-amino-acid chain; its full sequence is Putative sugar uptake protein lin0215 (286 aa).

Transmembrane regions (helical) follow at residues 4–26 (MIAL…FGGS), 33–55 (GMTL…VYTL), 114–136 (LRII…TSYA), 149–167 (GLIT…VVLI), 177–194 (AILP…IMTH), 207–226 (LLLI…MVHA), 230–252 (VGVA…GGIV), and 264–283 (LYVI…IGVA).

This sequence belongs to the GRP transporter (TC 2.A.7.5) family.

The protein resides in the cell membrane. The polypeptide is Putative sugar uptake protein lin0215 (Listeria innocua serovar 6a (strain ATCC BAA-680 / CLIP 11262)).